The sequence spans 370 residues: Dual-specificity RNA methyltransferase RlmN (370 aa).

The Proton acceptor role is filled by glutamate 93. One can recognise a Radical SAM core domain in the interval 99–337; that stretch reads EEGRGTLCVS…VTTVRKTRGD (239 aa). Cysteines 106 and 343 form a disulfide. The [4Fe-4S] cluster site is built by cysteine 113, cysteine 117, and cysteine 120. S-adenosyl-L-methionine contacts are provided by residues 167-168, serine 199, 221-223, and asparagine 300; these read GE and SLH. The S-methylcysteine intermediate role is filled by cysteine 343.

This sequence belongs to the radical SAM superfamily. RlmN family. [4Fe-4S] cluster is required as a cofactor.

The protein localises to the cytoplasm. It carries out the reaction adenosine(2503) in 23S rRNA + 2 reduced [2Fe-2S]-[ferredoxin] + 2 S-adenosyl-L-methionine = 2-methyladenosine(2503) in 23S rRNA + 5'-deoxyadenosine + L-methionine + 2 oxidized [2Fe-2S]-[ferredoxin] + S-adenosyl-L-homocysteine. The enzyme catalyses adenosine(37) in tRNA + 2 reduced [2Fe-2S]-[ferredoxin] + 2 S-adenosyl-L-methionine = 2-methyladenosine(37) in tRNA + 5'-deoxyadenosine + L-methionine + 2 oxidized [2Fe-2S]-[ferredoxin] + S-adenosyl-L-homocysteine. Its function is as follows. Specifically methylates position 2 of adenine 2503 in 23S rRNA and position 2 of adenine 37 in tRNAs. m2A2503 modification seems to play a crucial role in the proofreading step occurring at the peptidyl transferase center and thus would serve to optimize ribosomal fidelity. This chain is Dual-specificity RNA methyltransferase RlmN, found in Francisella tularensis subsp. mediasiatica (strain FSC147).